A 148-amino-acid polypeptide reads, in one-letter code: Large ribosomal subunit protein uL15 (148 aa).

Over residues 1–30 the composition is skewed to basic residues; the sequence is MPSRLRKTRKLRGHVSHGHGRIGKHRKHPG. A disordered region spans residues 1 to 37; the sequence is MPSRLRKTRKLRGHVSHGHGRIGKHRKHPGGRGNAGG. Residue His39 is modified to (3S)-3-hydroxyhistidine. N6-acetyllysine occurs at positions 47 and 55. Ser68 carries the phosphoserine modification. Lys110 is modified (N6-acetyllysine).

It belongs to the universal ribosomal protein uL15 family. As to quaternary structure, component of the large ribosomal subunit. Hydroxylated on His-39 by MINA.

Its subcellular location is the cytoplasm. In terms of biological role, component of the large ribosomal subunit. The ribosome is a large ribonucleoprotein complex responsible for the synthesis of proteins in the cell. This chain is Large ribosomal subunit protein uL15 (RPL27A), found in Bos taurus (Bovine).